The primary structure comprises 504 residues: Glycerol kinase (504 aa).

Thr12 lines the ADP pocket. 3 residues coordinate ATP: Thr12, Thr13, and Ser14. Thr12 provides a ligand contact to sn-glycerol 3-phosphate. Residue Arg16 coordinates ADP. 4 residues coordinate sn-glycerol 3-phosphate: Arg82, Glu83, Tyr134, and Asp246. The glycerol site is built by Arg82, Glu83, Tyr134, Asp246, and Gln247. The ADP site is built by Thr268 and Gly312. Positions 268, 312, 316, and 413 each coordinate ATP. Residues Gly413 and Asn417 each contribute to the ADP site.

This sequence belongs to the FGGY kinase family.

The enzyme catalyses glycerol + ATP = sn-glycerol 3-phosphate + ADP + H(+). Its pathway is polyol metabolism; glycerol degradation via glycerol kinase pathway; sn-glycerol 3-phosphate from glycerol: step 1/1. Inhibited by fructose 1,6-bisphosphate (FBP). Functionally, key enzyme in the regulation of glycerol uptake and metabolism. Catalyzes the phosphorylation of glycerol to yield sn-glycerol 3-phosphate. The protein is Glycerol kinase of Pseudarthrobacter chlorophenolicus (strain ATCC 700700 / DSM 12829 / CIP 107037 / JCM 12360 / KCTC 9906 / NCIMB 13794 / A6) (Arthrobacter chlorophenolicus).